Consider the following 191-residue polypeptide: Small ribosomal subunit protein uS5 (191 aa).

The region spanning 21 to 84 (FADRLVAINR…EQAKRQMIRV (64 aa)) is the S5 DRBM domain. The interval 155-191 (LRKESSPRSVAQRRGKKVADILPKVDAAPAPAETAEA) is disordered. Low complexity predominate over residues 181–191 (AAPAPAETAEA).

This sequence belongs to the universal ribosomal protein uS5 family. Part of the 30S ribosomal subunit. Contacts proteins S4 and S8.

Functionally, with S4 and S12 plays an important role in translational accuracy. Located at the back of the 30S subunit body where it stabilizes the conformation of the head with respect to the body. In Roseobacter denitrificans (strain ATCC 33942 / OCh 114) (Erythrobacter sp. (strain OCh 114)), this protein is Small ribosomal subunit protein uS5.